A 228-amino-acid chain; its full sequence is 2-C-methyl-D-erythritol 4-phosphate cytidylyltransferase (228 aa).

Belongs to the IspD/TarI cytidylyltransferase family. IspD subfamily.

The enzyme catalyses 2-C-methyl-D-erythritol 4-phosphate + CTP + H(+) = 4-CDP-2-C-methyl-D-erythritol + diphosphate. The protein operates within isoprenoid biosynthesis; isopentenyl diphosphate biosynthesis via DXP pathway; isopentenyl diphosphate from 1-deoxy-D-xylulose 5-phosphate: step 2/6. Functionally, catalyzes the formation of 4-diphosphocytidyl-2-C-methyl-D-erythritol from CTP and 2-C-methyl-D-erythritol 4-phosphate (MEP). This chain is 2-C-methyl-D-erythritol 4-phosphate cytidylyltransferase, found in Nostoc sp. (strain PCC 7120 / SAG 25.82 / UTEX 2576).